A 156-amino-acid chain; its full sequence is Small ribosomal subunit protein uS7 (156 aa).

This sequence belongs to the universal ribosomal protein uS7 family. As to quaternary structure, part of the 30S ribosomal subunit. Contacts proteins S9 and S11.

Its function is as follows. One of the primary rRNA binding proteins, it binds directly to 16S rRNA where it nucleates assembly of the head domain of the 30S subunit. Is located at the subunit interface close to the decoding center, probably blocks exit of the E-site tRNA. This is Small ribosomal subunit protein uS7 from Pelagibacter ubique (strain HTCC1062).